A 97-amino-acid polypeptide reads, in one-letter code: Large ribosomal subunit protein bL27 (97 aa).

Positions 1-12 (MIKLNLSNLQHF) are excised as a propeptide. The segment at 13-38 (AHKKGGGSTSNGRDSQAKRLGAKAAD) is disordered.

Belongs to the bacterial ribosomal protein bL27 family. In terms of processing, the N-terminus is cleaved by ribosomal processing cysteine protease Prp.

This Streptococcus equi subsp. equi (strain 4047) protein is Large ribosomal subunit protein bL27.